A 550-amino-acid polypeptide reads, in one-letter code: Arginine--tRNA ligase (550 aa).

Positions 130–140 (ANPTGPIHLGG) match the 'HIGH' region motif.

It belongs to the class-I aminoacyl-tRNA synthetase family. Monomer.

It is found in the cytoplasm. It catalyses the reaction tRNA(Arg) + L-arginine + ATP = L-arginyl-tRNA(Arg) + AMP + diphosphate. In Corynebacterium glutamicum (strain ATCC 13032 / DSM 20300 / JCM 1318 / BCRC 11384 / CCUG 27702 / LMG 3730 / NBRC 12168 / NCIMB 10025 / NRRL B-2784 / 534), this protein is Arginine--tRNA ligase (argS).